Here is a 353-residue protein sequence, read N- to C-terminus: Fe(3+) ions import ATP-binding protein FbpC (353 aa).

Positions 9 to 239 constitute an ABC transporter domain; that stretch reads VTFQNVRKSF…PASSFIADFM (231 aa). 41–48 lines the ATP pocket; sequence GPSGCGKT.

Belongs to the ABC transporter superfamily. Fe(3+) ion importer (TC 3.A.1.10) family. As to quaternary structure, the complex is composed of two ATP-binding proteins (FbpC), two transmembrane proteins (FbpB) and a solute-binding protein (FbpA).

The protein localises to the cell inner membrane. The enzyme catalyses Fe(3+)(out) + ATP + H2O = Fe(3+)(in) + ADP + phosphate + H(+). Functionally, part of the ABC transporter complex FbpABC involved in Fe(3+) ions import. Responsible for energy coupling to the transport system. The polypeptide is Fe(3+) ions import ATP-binding protein FbpC (Rhizobium etli (strain ATCC 51251 / DSM 11541 / JCM 21823 / NBRC 15573 / CFN 42)).